The primary structure comprises 591 residues: Oligopeptide-binding protein OppA (591 aa).

This sequence belongs to the bacterial solute-binding protein 5 family. In terms of assembly, the complex is composed of an ATP-binding protein (OppD), two transmembrane proteins (OppB and OppC) and a solute-binding protein (OppA).

It localises to the periplasm. Its function is as follows. Part of the ABC transporter complex OppABCD involved in the uptake of oligopeptides. Peptide-binding protein that shows broad specificity but a moderate preference for hydrophobic oligopeptides and those that are 6-16 amino acids long. The chain is Oligopeptide-binding protein OppA from Mycobacterium bovis (strain ATCC BAA-935 / AF2122/97).